The chain runs to 413 residues: Multifunctional CCA protein (413 aa).

ATP-binding residues include Gly8 and Arg11. Residues Gly8 and Arg11 each contribute to the CTP site. 2 residues coordinate Mg(2+): Asp21 and Asp23. ATP contacts are provided by Arg91, Arg137, and Arg140. CTP is bound by residues Arg91, Arg137, and Arg140. The HD domain occupies 228–329 (TGIHTLMVLE…VKLFDKADLW (102 aa)).

It belongs to the tRNA nucleotidyltransferase/poly(A) polymerase family. Bacterial CCA-adding enzyme type 1 subfamily. As to quaternary structure, monomer. Can also form homodimers and oligomers. Requires Mg(2+) as cofactor. It depends on Ni(2+) as a cofactor.

The catalysed reaction is a tRNA precursor + 2 CTP + ATP = a tRNA with a 3' CCA end + 3 diphosphate. It carries out the reaction a tRNA with a 3' CCA end + 2 CTP + ATP = a tRNA with a 3' CCACCA end + 3 diphosphate. In terms of biological role, catalyzes the addition and repair of the essential 3'-terminal CCA sequence in tRNAs without using a nucleic acid template. Adds these three nucleotides in the order of C, C, and A to the tRNA nucleotide-73, using CTP and ATP as substrates and producing inorganic pyrophosphate. tRNA 3'-terminal CCA addition is required both for tRNA processing and repair. Also involved in tRNA surveillance by mediating tandem CCA addition to generate a CCACCA at the 3' terminus of unstable tRNAs. While stable tRNAs receive only 3'-terminal CCA, unstable tRNAs are marked with CCACCA and rapidly degraded. This Shewanella loihica (strain ATCC BAA-1088 / PV-4) protein is Multifunctional CCA protein.